The following is a 338-amino-acid chain: Ferrochelatase (338 aa).

Fe cation-binding residues include H189 and E293.

Belongs to the ferrochelatase family.

The protein resides in the cytoplasm. It catalyses the reaction heme b + 2 H(+) = protoporphyrin IX + Fe(2+). It functions in the pathway porphyrin-containing compound metabolism; protoheme biosynthesis; protoheme from protoporphyrin-IX: step 1/1. In terms of biological role, catalyzes the ferrous insertion into protoporphyrin IX. The protein is Ferrochelatase of Azotobacter vinelandii (strain DJ / ATCC BAA-1303).